The chain runs to 137 residues: Basic phospholipase A2 homolog Bsc-K49 (137 aa).

An N-terminal signal peptide occupies residues 1 to 16 (MRTLWIVAVLLVGVEG). Cystine bridges form between Cys42–Cys131, Cys44–Cys60, Cys59–Cys111, Cys65–Cys137, Cys66–Cys104, Cys73–Cys97, and Cys91–Cys102. The interval 121–133 (KNYKITMKMFCKK) is important for membrane-damaging activities in eukaryotes and bacteria; heparin-binding.

It belongs to the phospholipase A2 family. Group II subfamily. K49 sub-subfamily. Homodimer; non-covalently linked. As to expression, expressed by the venom gland.

It localises to the secreted. Functionally, snake venom phospholipase A2 that lacks enzymatic activity. Is myotoxic, and displays edema-inducing activities. A model of myotoxic mechanism has been proposed: an apo Lys49-PLA2 is activated by the entrance of a hydrophobic molecule (e.g. fatty acid) at the hydrophobic channel of the protein leading to a reorientation of a monomer. This reorientation causes a transition between 'inactive' to 'active' states, causing alignment of C-terminal and membrane-docking sites (MDoS) side-by-side and putting the membrane-disruption sites (MDiS) in the same plane, exposed to solvent and in a symmetric position for both monomers. The MDoS region stabilizes the toxin on membrane by the interaction of charged residues with phospholipid head groups. Subsequently, the MDiS region destabilizes the membrane with penetration of hydrophobic residues. This insertion causes a disorganization of the membrane, allowing an uncontrolled influx of ions (i.e. calcium and sodium), and eventually triggering irreversible intracellular alterations and cell death. In Bothriechis schlegelii (Eyelash palm pitviper), this protein is Basic phospholipase A2 homolog Bsc-K49.